The sequence spans 305 residues: Protoheme IX farnesyltransferase (305 aa).

The next 9 helical transmembrane spans lie at 31–51 (VMSL…YSVH), 52–72 (PFIA…AGAI), 96–118 (VIES…FFMA), 122–144 (NLLA…TIWL), 151–171 (NIVI…AAVS), 180–200 (ILFL…ALFC), 225–245 (ILIY…IGMN), 247–267 (FIYL…AGSL), and 281–301 (FAYS…TNTI).

It belongs to the UbiA prenyltransferase family. Protoheme IX farnesyltransferase subfamily.

It is found in the cell inner membrane. It carries out the reaction heme b + (2E,6E)-farnesyl diphosphate + H2O = Fe(II)-heme o + diphosphate. It participates in porphyrin-containing compound metabolism; heme O biosynthesis; heme O from protoheme: step 1/1. In terms of biological role, converts heme B (protoheme IX) to heme O by substitution of the vinyl group on carbon 2 of heme B porphyrin ring with a hydroxyethyl farnesyl side group. The chain is Protoheme IX farnesyltransferase from Rickettsia peacockii (strain Rustic).